A 984-amino-acid chain; its full sequence is Ephrin type-A receptor 3 (984 aa).

Positions 1–20 (MDCHLSILILFGCCVLSCSR) are cleaved as a signal peptide. At 21–541 (ELSPQPSNEV…SFSISGENSH (521 aa)) the chain is on the extracellular side. The Eph LBD domain maps to 29–207 (EVNLLDSKTI…YFKKCPFTVK (179 aa)). N-linked (GlcNAc...) asparagine glycans are attached at residues N232, N337, N391, N404, and N493. 2 Fibronectin type-III domains span residues 325–435 (PPSA…TNQA) and 436–532 (APSP…SPDS). A helical membrane pass occupies residues 542–565 (VVMIAISAAVAIIVLTVVTYVLVG). At 566 to 984 (RFCGYHKSKH…TQSKNGPVPV (419 aa)) the chain is on the cytoplasmic side. Phosphotyrosine; by autocatalysis is present on residues Y597 and Y603. A Protein kinase domain is found at 622–883 (IAIDKVVGAG…QIVSILDKLI (262 aa)). Residues 629–634 (GAGEFG), K654, and 701–707 (EYMENGS) each bind ATP. Residue Y702 is modified to Phosphotyrosine; by autocatalysis. The active-site Proton acceptor is D747. 751-752 (RN) contributes to the ATP binding site. Y780 carries the post-translational modification Phosphotyrosine; by autocatalysis. In terms of domain architecture, SAM spans 912–976 (ATFHTTGDWL…ISSIKALETQ (65 aa)). Y938 carries the post-translational modification Phosphotyrosine. Positions 982–984 (VPV) match the PDZ-binding motif.

The protein belongs to the protein kinase superfamily. Tyr protein kinase family. Ephrin receptor subfamily. In terms of assembly, heterotetramer upon binding of the ligand. The heterotetramer is composed of an ephrin dimer and a receptor dimer. Oligomerization is probably required to induce biological responses. Forms a ternary EFNA5-EPHA3-ADAM10 complex mediating EFNA5 extracellular domain shedding by ADAM10 which regulates the EFNA5-EPHA3 complex internalization and function. Interacts (phosphorylated) with PTPN1; dephosphorylates EPHA3 and may regulate its trafficking and function. Interacts (phosphorylated) with CRK; mediates EFNA5-EPHA3 signaling through RHOA GTPase activation. Interacts with NCK1 (via SH2 domain); mediates EFNA5-EPHA3 signaling. Autophosphorylates upon activation by EFNA5. Phosphorylation on Tyr-603 mediates interaction with NCK1. Dephosphorylated by PTPN1. As to expression, most abundant in the heart, brain and lung.

It localises to the cell membrane. It catalyses the reaction L-tyrosyl-[protein] + ATP = O-phospho-L-tyrosyl-[protein] + ADP + H(+). Its function is as follows. Receptor tyrosine kinase which binds promiscuously membrane-bound ephrin family ligands residing on adjacent cells, leading to contact-dependent bidirectional signaling into neighboring cells. The signaling pathway downstream of the receptor is referred to as forward signaling while the signaling pathway downstream of the ephrin ligand is referred to as reverse signaling. Highly promiscuous for ephrin-A ligands it binds preferentially EFNA5. Upon activation by EFNA5 regulates cell-cell adhesion, cytoskeletal organization and cell migration. Plays a role in cardiac cells migration and differentiation and regulates the formation of the atrioventricular canal and septum during development probably through activation by EFNA1. Involved in the retinotectal mapping of neurons. May also control the segregation but not the guidance of motor and sensory axons during neuromuscular circuit development. In Rattus norvegicus (Rat), this protein is Ephrin type-A receptor 3 (Epha3).